A 102-amino-acid chain; its full sequence is Movement protein (102 aa).

Residues 43–63 (VVALIVILFAVGIVYLAYTLF) traverse the membrane as a helical segment. The disordered stretch occupies residues 82 to 102 (IGFGNTPLRRPGEGNPNGGPV).

It belongs to the mastrevirus movement protein family. In terms of assembly, interacts with the capsid protein (CP). Part of a MP-CP-viral DNA complex.

It is found in the host membrane. In terms of biological role, involved in the viral transport within, and between cells. This is Movement protein from Tobacco yellow dwarf virus (strain Australia) (TYDV).